A 74-amino-acid chain; its full sequence is Putative defensin-like protein 128 (74 aa).

An N-terminal signal peptide occupies residues 1–24 (MSKLTNVVIFIVFFLGMMAKETQG). Disulfide bonds link Cys-28–Cys-72, Cys-37–Cys-56, Cys-42–Cys-66, and Cys-46–Cys-68.

Belongs to the DEFL family.

It localises to the secreted. This is Putative defensin-like protein 128 (LCR8) from Arabidopsis thaliana (Mouse-ear cress).